A 217-amino-acid polypeptide reads, in one-letter code: Cytidylate kinase (217 aa).

9 to 17 (GPSSSGKSS) is an ATP binding site.

Belongs to the cytidylate kinase family. Type 1 subfamily.

The protein resides in the cytoplasm. The catalysed reaction is CMP + ATP = CDP + ADP. It carries out the reaction dCMP + ATP = dCDP + ADP. This is Cytidylate kinase from Mycoplasma genitalium (strain ATCC 33530 / DSM 19775 / NCTC 10195 / G37) (Mycoplasmoides genitalium).